We begin with the raw amino-acid sequence, 327 residues long: MGRNSQGFLTTIRIIVTSATDQPSNFIHSLSNKRESTMRQIAFYGKGGIGKSTTSQNTIAALAETNRIMIVGCDPKADSTRLMLHTKAQTTILHLAAERGTVEDIELEEVLLEGYQGVKCVESGGPEPGVGCAGRGIITAINFLEEEGAYEDLDFVSYDVLGDVVCGGFAMPIREGKAQEIYIVTSGEMMAMYAANNIARGILKYAHTGGVRLGGLICNSRNVNCEAELIEELARRLGTQMIHFVPRSKQVQEAELRRMTVIEYSPDHPQAQEYRELSRKIENNTNLVIPTPITMEELEELLVDFGILGGEDEYEKALQADKAATKA.

The tract at residues 1 to 37 is PEST-like; not found in other NifH; sequence MGRNSQGFLTTIRIIVTSATDQPSNFIHSLSNKREST. 45-52 contributes to the ATP binding site; it reads GKGGIGKS. C132 is a [4Fe-4S] cluster binding site. R135 carries the post-translational modification ADP-ribosylarginine; by dinitrogenase reductase ADP-ribosyltransferase. C166 serves as a coordination point for [4Fe-4S] cluster.

This sequence belongs to the NifH/BchL/ChlL family. As to quaternary structure, homodimer. It depends on [4Fe-4S] cluster as a cofactor. The reversible ADP-ribosylation of Arg-135 inactivates the nitrogenase reductase and regulates nitrogenase activity.

It carries out the reaction N2 + 8 reduced [2Fe-2S]-[ferredoxin] + 16 ATP + 16 H2O = H2 + 8 oxidized [2Fe-2S]-[ferredoxin] + 2 NH4(+) + 16 ADP + 16 phosphate + 6 H(+). Its function is as follows. The key enzymatic reactions in nitrogen fixation are catalyzed by the nitrogenase complex, which has 2 components: the iron protein and the molybdenum-iron protein. This chain is Nitrogenase iron protein (nifH), found in Crocosphaera subtropica (strain ATCC 51142 / BH68) (Cyanothece sp. (strain ATCC 51142)).